The chain runs to 408 residues: Phosphoglycerate kinase (408 aa).

Substrate-binding positions include 24 to 26, Arg40, 63 to 66, Arg122, and Arg166; these read DLN and HLGR. ATP-binding positions include Lys216, Gly304, Glu335, and 364-367; that span reads GGDS.

The protein belongs to the phosphoglycerate kinase family. As to quaternary structure, monomer.

The protein localises to the cytoplasm. The catalysed reaction is (2R)-3-phosphoglycerate + ATP = (2R)-3-phospho-glyceroyl phosphate + ADP. The protein operates within carbohydrate degradation; glycolysis; pyruvate from D-glyceraldehyde 3-phosphate: step 2/5. The protein is Phosphoglycerate kinase of Mycolicibacterium smegmatis (strain ATCC 700084 / mc(2)155) (Mycobacterium smegmatis).